The sequence spans 217 residues: PTB-containing, cubilin and LRP1-interacting protein (217 aa).

In terms of domain architecture, PID spans 60–217 (VTYLGKVSTT…ASQELESDDG (158 aa)). A disordered region spans residues 194–217 (KSDGRIHRSSSSEEASQELESDDG). Ser-202, Ser-203, and Ser-214 each carry phosphoserine. Acidic residues predominate over residues 208–217 (ASQELESDDG).

As to quaternary structure, found in a complex with PID1/PCLI1, LRP1 and CUBNI. Interacts with LRP1 and CUBN.

Its subcellular location is the cytoplasm. In terms of biological role, increases proliferation of preadipocytes without affecting adipocytic differentiation. This is PTB-containing, cubilin and LRP1-interacting protein (Pid1) from Mus musculus (Mouse).